The sequence spans 269 residues: uncharacterized protein (269 aa).

Residues 1–12 (MSKRTNNKKRKH) show a composition bias toward basic residues. The segment at 1-82 (MSKRTNNKKR…KKKENGNENV (82 aa)) is disordered. The span at 21–33 (PENQDENQDEEFL) shows a compositional bias: acidic residues. A compositionally biased stretch (basic and acidic residues) spans 34 to 63 (EDKNKDKNQNKNKDKNKNKDMNKNKNKDMN).

This is an uncharacterized protein from Dictyostelium discoideum (Social amoeba).